Reading from the N-terminus, the 91-residue chain is Cell division protein ZapA (91 aa).

Residues 59 to 86 (TAVNIANEYLKLKEEYDRLAAKLRREKG) adopt a coiled-coil conformation.

It belongs to the ZapA family. Type 2 subfamily. As to quaternary structure, homodimer. Interacts with FtsZ.

Its subcellular location is the cytoplasm. Activator of cell division through the inhibition of FtsZ GTPase activity, therefore promoting FtsZ assembly into bundles of protofilaments necessary for the formation of the division Z ring. It is recruited early at mid-cell but it is not essential for cell division. The protein is Cell division protein ZapA of Geobacillus thermodenitrificans (strain NG80-2).